The primary structure comprises 336 residues: Biotin synthase (336 aa).

Positions 52–279 constitute a Radical SAM core domain; it reads KAIQLSTLMS…KSYVRLSAGR (228 aa). Residues cysteine 67, cysteine 71, and cysteine 74 each coordinate [4Fe-4S] cluster. Residues cysteine 111, cysteine 142, cysteine 202, and arginine 274 each coordinate [2Fe-2S] cluster.

Belongs to the radical SAM superfamily. Biotin synthase family. Homodimer. [4Fe-4S] cluster is required as a cofactor. The cofactor is [2Fe-2S] cluster.

The catalysed reaction is (4R,5S)-dethiobiotin + (sulfur carrier)-SH + 2 reduced [2Fe-2S]-[ferredoxin] + 2 S-adenosyl-L-methionine = (sulfur carrier)-H + biotin + 2 5'-deoxyadenosine + 2 L-methionine + 2 oxidized [2Fe-2S]-[ferredoxin]. It participates in cofactor biosynthesis; biotin biosynthesis; biotin from 7,8-diaminononanoate: step 2/2. Its function is as follows. Catalyzes the conversion of dethiobiotin (DTB) to biotin by the insertion of a sulfur atom into dethiobiotin via a radical-based mechanism. The chain is Biotin synthase from Pasteurella multocida (strain Pm70).